Here is a 299-residue protein sequence, read N- to C-terminus: uncharacterized protein (299 aa).

Positions 1–59 constitute an HTH lysR-type domain; it reads MDKIHAMQLFIKVAELESFSRAADFFALPKGSVSRQIQALEHQLGTQLLQRTTRRVKLT. The segment at residues 19–38 is a DNA-binding region (H-T-H motif); the sequence is FSRAADFFALPKGSVSRQIQ.

Belongs to the LysR transcriptional regulatory family.

This is an uncharacterized protein from Escherichia coli (strain K12).